Consider the following 370-residue polypeptide: Phospho-N-acetylmuramoyl-pentapeptide-transferase (370 aa).

The next 11 helical transmembrane spans lie at 15–35 (PLEG…AAFA), 44–64 (LLSL…WWGV), 93–113 (MGGL…SWSG), 115–135 (AAEQ…VGGI), 155–175 (LLLQ…RGWI), 183–203 (FDIN…VFLA), 213–233 (GLDG…ALQL), 240–260 (GDPS…GFLV), 268–288 (VFMG…VALL), 296–316 (LIMG…VWVF), and 347–367 (QLVV…GIFF).

It belongs to the glycosyltransferase 4 family. MraY subfamily. Requires Mg(2+) as cofactor.

It is found in the cell inner membrane. It carries out the reaction UDP-N-acetyl-alpha-D-muramoyl-L-alanyl-gamma-D-glutamyl-meso-2,6-diaminopimeloyl-D-alanyl-D-alanine + di-trans,octa-cis-undecaprenyl phosphate = di-trans,octa-cis-undecaprenyl diphospho-N-acetyl-alpha-D-muramoyl-L-alanyl-D-glutamyl-meso-2,6-diaminopimeloyl-D-alanyl-D-alanine + UMP. Its pathway is cell wall biogenesis; peptidoglycan biosynthesis. Its function is as follows. Catalyzes the initial step of the lipid cycle reactions in the biosynthesis of the cell wall peptidoglycan: transfers peptidoglycan precursor phospho-MurNAc-pentapeptide from UDP-MurNAc-pentapeptide onto the lipid carrier undecaprenyl phosphate, yielding undecaprenyl-pyrophosphoryl-MurNAc-pentapeptide, known as lipid I. The sequence is that of Phospho-N-acetylmuramoyl-pentapeptide-transferase from Synechococcus sp. (strain CC9311).